The sequence spans 209 residues: Cytidylate kinase (209 aa).

Position 7–15 (7–15 (GVAASGKSS)) interacts with ATP.

This sequence belongs to the cytidylate kinase family. Type 1 subfamily.

The protein resides in the cytoplasm. It carries out the reaction CMP + ATP = CDP + ADP. The enzyme catalyses dCMP + ATP = dCDP + ADP. In Deinococcus geothermalis (strain DSM 11300 / CIP 105573 / AG-3a), this protein is Cytidylate kinase.